Reading from the N-terminus, the 1841-residue chain is Cell division control protein 12 (1841 aa).

Polar residues-rich tracts occupy residues 1-25 (MRNSSKGQDPNFSYDSILSTPTPSA) and 46-63 (SIESVSTLIQPNKSQSVT). Disordered regions lie at residues 1-63 (MRNS…QSVT), 78-134 (NSHN…GPRL), and 152-181 (PPVHSRSFDPLPKPPVPSVPVSKTKRRTKH). The 389-residue stretch at 232–620 (TRPPSLDQLI…RILLNSKVSN (389 aa)) folds into the GBD/FH3 domain. A coiled-coil region spans residues 674-715 (LGAEDLIAKLNKEVEDQKDVILSQKRTNETLKTEIDALQKSH). Residues 740 to 972 (GSTNSKERII…VSPAVSNNIS (233 aa)) form the FH1 domain. One can recognise an FH2 domain in the interval 980-1391 (TGLTRRPTRR…QHRRLNLVNN (412 aa)). A coiled-coil region spans residues 1260–1290 (TEAAKLNIEAIEQECSELIRGCQNLQIDCDS). Disordered stretches follow at residues 1445–1661 (EAPN…ENNL), 1696–1715 (TTTTISTARAKPGNNDINTI), and 1735–1758 (KSNKFSGTNDLNFQQATKPDGSNK). Composition is skewed to polar residues over residues 1447-1456 (PNTSTKSSPA) and 1483-1497 (SESTDGLSDALNITP). Positions 1499 to 1516 (KKGEVSSKAKKGYNYEKR) are enriched in basic and acidic residues. Positions 1539 to 1553 (GRSASYTFSDPSSLE) are enriched in polar residues. Position 1541 is a phosphoserine (serine 1541). A Phosphotyrosine modification is found at tyrosine 1544. Over residues 1554 to 1567 (DSNRQKPFNGEKFR) the composition is skewed to basic and acidic residues. Over residues 1568–1577 (RFSSKSRRGS) the composition is skewed to basic residues. A compositionally biased stretch (polar residues) spans 1594–1604 (INNNQTSPQNK). Residues 1605-1621 (PSKESLKSDTISNEKKV) show a composition bias toward basic and acidic residues. Over residues 1630-1641 (NLLTPTISNGTR) the composition is skewed to polar residues.

It belongs to the formin homology family. BNI1 subfamily. As to quaternary structure, interacts with profilin and actin at the FH1 and FH2 domains respectively.

It is found in the nucleus. Its function is as follows. Plays a role in the cell cycle. Involved in cytokinesis. Component of the cell division ring. In the absence of profilin, caps the barbed end of actin filaments, thus preventing subunit addition and dissociation. In the presence of profilin, nucleates actin filaments that grow rapidly from their barbed ends. This chain is Cell division control protein 12 (cdc12), found in Schizosaccharomyces pombe (strain 972 / ATCC 24843) (Fission yeast).